Reading from the N-terminus, the 650-residue chain is XK-related protein 4 (650 aa).

The span at 1–15 shows a compositional bias: basic and acidic residues; it reads MAAKSDGRLKMKKSS. The segment at 1–44 is disordered; the sequence is MAAKSDGRLKMKKSSDVAFTPLQNSDHSGSVQGLAPGLPSGSGA. Residues 21-31 show a composition bias toward polar residues; that stretch reads PLQNSDHSGSV. 2 consecutive transmembrane segments (helical) span residues 114–134 and 144–164; these read WILA…WLAV and WFGL…VFSF. S200 is modified (phosphoserine). A disordered region spans residues 200 to 238; the sequence is SAAGEGEARPSTPQRQASNASKSNIAAANSGSNSSGATR. The span at 216-238 shows a compositional bias: low complexity; that stretch reads ASNASKSNIAAANSGSNSSGATR. 8 consecutive transmembrane segments (helical) span residues 248 to 268, 306 to 326, 331 to 351, 365 to 385, 396 to 418, 428 to 448, 457 to 477, and 487 to 507; these read CSFC…GQIW, HLLA…CIIV, LQAL…WALA, KPIS…TIAA, VFQL…WIVH, WEEI…WFNV, LFIY…LWYL, and FAIP…VFML.

This sequence belongs to the XK family. Homodimer; homodimerization takes place upon caspase cleavage. Interacts with the processed C-terminus of XRCC4 (protein XRCC4, C-terminus); interaction promotes the phospholipid scramblase activity. In terms of processing, undergoes proteolytic processing by caspase-3 (CASP3), caspase-6 (CASP6) and caspase-7 (CASP7) to generate the XK-related protein 4, processed form, leading to its activation.

It is found in the cell membrane. The enzyme catalyses a 1,2-diacyl-sn-glycero-3-phospho-L-serine(in) = a 1,2-diacyl-sn-glycero-3-phospho-L-serine(out). With respect to regulation, phospholipid scramblase activity is activated upon caspase cleavage to generate the XK-related protein 4, processed form. Does not act prior the onset of apoptosis. Its activity is regulated as follows. Homodimerizes upon caspase cleavage. Phospholipid scramblase activity is activated following interaction with the processed C-terminus of XRCC4 (protein XRCC4, C-terminus). Functionally, phospholipid scramblase that promotes phosphatidylserine exposure on apoptotic cell surface. Phosphatidylserine is a specific marker only present at the surface of apoptotic cells and acts as a specific signal for engulfment. This Homo sapiens (Human) protein is XK-related protein 4.